The primary structure comprises 151 residues: Endoribonuclease YbeY (151 aa).

Zn(2+) is bound by residues His-113, His-117, and His-123.

The protein belongs to the endoribonuclease YbeY family. Zn(2+) serves as cofactor.

It is found in the cytoplasm. In terms of biological role, single strand-specific metallo-endoribonuclease involved in late-stage 70S ribosome quality control and in maturation of the 3' terminus of the 16S rRNA. This Polaromonas naphthalenivorans (strain CJ2) protein is Endoribonuclease YbeY.